The following is a 384-amino-acid chain: MKKDENLLKDLWFIAISAAGGFILSLTGISIGWMIGTLIVACCLAMIRPAWLMMAPDQKGINRRWLALGQMILGIELGQKLNLSVLSVLKDHWFSVGVMLILSILLAMLSGYVLWRFSKTDMMTSFVGTAPGGLSAMPSIAQEVGANTAIVSLVQMMRVLLVVLSIPFLVILIYTKQDRTASAAAETISSATTDFRLAPVLWTVILILAAWGACKAAKFLKFPAPWLLGSMLGVAIVHVGGAAVTGHDMTAWWLSQANHVSQVFLGATIGSKMYKSMFAGVTRIIIVGFVSSVGLIAAMFLSAVIVSELTGISLITSVLAFAPGGIAEMATTSVTLHADSTFVVAVQVIRVILVIALLPPFYRLLHHLHGEKKDKKSSISGSSA.

10 helical membrane-spanning segments follow: residues 11–31 (LWFI…GISI), 33–53 (WMIG…AWLM), 66–86 (LALG…LSVL), 94–114 (FSVG…GYVL), 153–173 (LVQM…VILI), 197–217 (LAPV…CKAA), 224–244 (APWL…GAAV), 284–304 (IIIV…LSAV), 309–329 (LTGI…IAEM), and 342–362 (FVVA…PPFY).

This sequence belongs to the AbrB family.

Its subcellular location is the cell membrane. This is an uncharacterized protein from Bacillus subtilis (strain 168).